A 235-amino-acid chain; its full sequence is 7-carboxy-7-deazaguanine synthase (235 aa).

Residues 27–29 (LQG) and R42 contribute to the substrate site. The Radical SAM core domain maps to 33–235 (FSGQPSVFVR…VQVHKILKIA (203 aa)). 3 residues coordinate [4Fe-4S] cluster: C46, C50, and C53. A Mg(2+)-binding site is contributed by T55. T87 provides a ligand contact to substrate. S-adenosyl-L-methionine is bound by residues G89 and 133 to 135 (SPK).

It belongs to the radical SAM superfamily. 7-carboxy-7-deazaguanine synthase family. Homodimer. [4Fe-4S] cluster serves as cofactor. The cofactor is S-adenosyl-L-methionine. Requires Mg(2+) as cofactor.

It catalyses the reaction 6-carboxy-5,6,7,8-tetrahydropterin + H(+) = 7-carboxy-7-deazaguanine + NH4(+). The protein operates within purine metabolism; 7-cyano-7-deazaguanine biosynthesis. Catalyzes the complex heterocyclic radical-mediated conversion of 6-carboxy-5,6,7,8-tetrahydropterin (CPH4) to 7-carboxy-7-deazaguanine (CDG), a step common to the biosynthetic pathways of all 7-deazapurine-containing compounds. The polypeptide is 7-carboxy-7-deazaguanine synthase (Rhodospirillum rubrum (strain ATCC 11170 / ATH 1.1.1 / DSM 467 / LMG 4362 / NCIMB 8255 / S1)).